A 320-amino-acid chain; its full sequence is Sensor histidine kinase YbdK (320 aa).

Residues 1–21 form a helical membrane-spanning segment; that stretch reads MLLFTAVISVPMLLLAVSVLM. The Extracellular portion of the chain corresponds to 22 to 41; it reads SVIYDSMFKPMNHGMPFHRS. Residues 42–62 form a helical membrane-spanning segment; the sequence is FAYPAMIVVFLISLLLLAFLF. The Cytoplasmic segment spans residues 63 to 320; that stretch reads SKSIHSLLHK…NGTGFLFSKE (258 aa). An HAMP domain is found at 67-120; that stretch reads HSLLHKINLLNQTIRHLASDQRVPDKIEVKRADEIGELIKSVNLLIERTTYREL. Residues 135 to 320 form the Histidine kinase domain; that stretch reads KLRHDINTPL…NGTGFLFSKE (186 aa). Histidine 138 is modified (phosphohistidine; by autocatalysis).

The protein localises to the cell membrane. It catalyses the reaction ATP + protein L-histidine = ADP + protein N-phospho-L-histidine.. Its function is as follows. Member of the two-component regulatory system YbdK/YbdJ. Probably activates YbdJ by phosphorylation. The protein is Sensor histidine kinase YbdK (ybdK) of Bacillus subtilis (strain 168).